The chain runs to 155 residues: Interleukin-2 (155 aa).

The first 20 residues, methionine 1–glycine 20, serve as a signal peptide directing secretion. Threonine 23 is a glycosylation site (O-linked (GalNAc...) threonine). Residues cysteine 79 and cysteine 127 are joined by a disulfide bond.

Belongs to the IL-2 family.

The protein localises to the secreted. Cytokine produced by activated CD4-positive helper T-cells and to a lesser extend activated CD8-positive T-cells and natural killer (NK) cells that plays pivotal roles in the immune response and tolerance. Binds to a receptor complex composed of either the high-affinity trimeric IL-2R (IL2RA/CD25, IL2RB/CD122 and IL2RG/CD132) or the low-affinity dimeric IL-2R (IL2RB and IL2RG). Interaction with the receptor leads to oligomerization and conformation changes in the IL-2R subunits resulting in downstream signaling starting with phosphorylation of JAK1 and JAK3. In turn, JAK1 and JAK3 phosphorylate the receptor to form a docking site leading to the phosphorylation of several substrates including STAT5. This process leads to activation of several pathways including STAT, phosphoinositide-3-kinase/PI3K and mitogen-activated protein kinase/MAPK pathways. Functions as a T-cell growth factor and can increase NK-cell cytolytic activity as well. Promotes strong proliferation of activated B-cells and subsequently immunoglobulin production. Plays a pivotal role in regulating the adaptive immune system by controlling the survival and proliferation of regulatory T-cells, which are required for the maintenance of immune tolerance. Moreover, participates in the differentiation and homeostasis of effector T-cell subsets, including Th1, Th2, Th17 as well as memory CD8-positive T-cells. The polypeptide is Interleukin-2 (IL2) (Moschus berezovskii (Chinese forest musk deer)).